A 510-amino-acid polypeptide reads, in one-letter code: Ribose import ATP-binding protein RbsA 1 (510 aa).

ABC transporter domains follow at residues 20–256 (LEMR…VGRD) and 266–510 (VTLG…TGNA). 52-59 (GENGAGKS) provides a ligand contact to ATP.

The protein belongs to the ABC transporter superfamily. Ribose importer (TC 3.A.1.2.1) family. As to quaternary structure, the complex is composed of an ATP-binding protein (RbsA), two transmembrane proteins (RbsC) and a solute-binding protein (RbsB).

The protein resides in the cell inner membrane. The enzyme catalyses D-ribose(out) + ATP + H2O = D-ribose(in) + ADP + phosphate + H(+). Its function is as follows. Part of the ABC transporter complex RbsABC involved in ribose import. Responsible for energy coupling to the transport system. The polypeptide is Ribose import ATP-binding protein RbsA 1 (Agrobacterium fabrum (strain C58 / ATCC 33970) (Agrobacterium tumefaciens (strain C58))).